A 356-amino-acid polypeptide reads, in one-letter code: UDP-N-acetylglucosamine--N-acetylmuramyl-(pentapeptide) pyrophosphoryl-undecaprenol N-acetylglucosamine transferase (356 aa).

The UDP-N-acetyl-alpha-D-glucosamine site is built by R166, S196, and Q290.

The protein belongs to the glycosyltransferase 28 family. MurG subfamily.

Its subcellular location is the cell membrane. It catalyses the reaction Mur2Ac(oyl-L-Ala-gamma-D-Glu-L-Lys-D-Ala-D-Ala)-di-trans,octa-cis-undecaprenyl diphosphate + UDP-N-acetyl-alpha-D-glucosamine = beta-D-GlcNAc-(1-&gt;4)-Mur2Ac(oyl-L-Ala-gamma-D-Glu-L-Lys-D-Ala-D-Ala)-di-trans,octa-cis-undecaprenyl diphosphate + UDP + H(+). It participates in cell wall biogenesis; peptidoglycan biosynthesis. Cell wall formation. Catalyzes the transfer of a GlcNAc subunit on undecaprenyl-pyrophosphoryl-MurNAc-pentapeptide (lipid intermediate I) to form undecaprenyl-pyrophosphoryl-MurNAc-(pentapeptide)GlcNAc (lipid intermediate II). In Staphylococcus aureus (strain USA300), this protein is UDP-N-acetylglucosamine--N-acetylmuramyl-(pentapeptide) pyrophosphoryl-undecaprenol N-acetylglucosamine transferase.